The sequence spans 507 residues: Cystathionine beta-synthase (507 aa).

Lys53 carries the N6-(pyridoxal phosphate)lysine modification. Asn84 contributes to the pyridoxal 5'-phosphate binding site. Ser134 carries the phosphoserine modification. Pyridoxal 5'-phosphate contacts are provided by residues 196–200 (GTGGT) and Ser289. A phosphoserine mark is found at Ser350 and Ser424. One can recognise a CBS domain in the interval 373–432 (HLKPVVSVKETAKVTDVIKILKDNGFDQLPVLTEDGKLSGLVTLSELLRKLSINNSNNDN).

The protein belongs to the cysteine synthase/cystathionine beta-synthase family. Pyridoxal 5'-phosphate serves as cofactor.

The catalysed reaction is L-homocysteine + L-serine = L,L-cystathionine + H2O. It functions in the pathway amino-acid biosynthesis; L-cysteine biosynthesis; L-cysteine from L-homocysteine and L-serine: step 1/2. This chain is Cystathionine beta-synthase (CYS4), found in Saccharomyces cerevisiae (strain ATCC 204508 / S288c) (Baker's yeast).